Here is a 769-residue protein sequence, read N- to C-terminus: PDZ domain-containing protein 4 (769 aa).

One can recognise a PDZ domain in the interval 130–214 (EVELYKSSHR…TNISLLVARP (85 aa)). Positions 221–315 (RWKDSDRDDF…TNTPGSLRKF (95 aa)) are disordered. Residues 229 to 239 (DFLDDFGSENE) are compositionally biased toward acidic residues. The residue at position 236 (Ser-236) is a Phosphoserine. Residues 282–298 (RTDESTRNEESSEHDLL) are compositionally biased toward basic and acidic residues. Residues 389–419 (VNRNESLGHEMAMLEEELRHLEFKCRNILRA) adopt a coiled-coil conformation. A disordered region spans residues 445–579 (ASEPKKHELS…RHRGQGQEGE (135 aa)). Basic and acidic residues predominate over residues 447–467 (EPKKHELSDISELPEKSDKDS). Residue Ser-454 is modified to Phosphoserine. Polar residues predominate over residues 468–479 (TSAYNTGESCRS). Over residues 530 to 547 (LSRDPEAGRRQHAEERGR) the composition is skewed to basic and acidic residues.

Brain-specific. Expressed in fetal and adult brain. Up-regulated in synovial carcinomas.

Its subcellular location is the cytoplasm. It is found in the cell cortex. The polypeptide is PDZ domain-containing protein 4 (PDZD4) (Homo sapiens (Human)).